Reading from the N-terminus, the 275-residue chain is MTAITISDQEYRDFCRFLESQCGIVLGDSKQYLVRSRLSPLVTKFKLSSLSDLLRDVVTGRNRDLRVAAVDAMTTNETLWFRDSYPFTVLADKLLPEMAANKRPIKIWSAASSSGQEPYSMAMTILEVQQKRPGLLPSVSITATDISASMLDMCRAGIYDNLALGRGLSPERRRVFFEDAGDGRMKVKDNVKRLVNFRPQNLMESYSLLGKFDIIFCRNVLIYFSPDMKSKVLNQMAASLNPGGYLLLGASESLTGLTDKFEMVRCNPGIIYKLK.

The 275-residue stretch at 1–275 (MTAITISDQE…CNPGIIYKLK (275 aa)) folds into the CheR-type methyltransferase domain. Residues Asn-76, Thr-78, Arg-82, Glu-117, Asp-145, 201 to 202 (NL), and 218 to 219 (RN) each bind S-adenosyl-L-methionine.

The enzyme catalyses L-glutamyl-[protein] + S-adenosyl-L-methionine = [protein]-L-glutamate 5-O-methyl ester + S-adenosyl-L-homocysteine. In terms of biological role, methylation of the membrane-bound methyl-accepting chemotaxis proteins (MCP) to form gamma-glutamyl methyl ester residues in MCP. The chain is Chemotaxis protein methyltransferase 1 (cheR1) from Vibrio cholerae serotype O1 (strain ATCC 39315 / El Tor Inaba N16961).